The sequence spans 118 residues: D-dopachrome decarboxylase (118 aa).

Position 2 is an N-acetylproline (proline 2). Lysine 33 carries the N6-acetyllysine modification.

Belongs to the MIF family. As to quaternary structure, homotrimer. As to expression, highly expressed in the liver and at lower levels in the heart, lung and pancreas.

It localises to the cytoplasm. The catalysed reaction is D-dopachrome + H(+) = 5,6-dihydroxyindole + CO2. Its function is as follows. Tautomerization of D-dopachrome with decarboxylation to give 5,6-dihydroxyindole (DHI). This chain is D-dopachrome decarboxylase (DDT), found in Homo sapiens (Human).